Reading from the N-terminus, the 443-residue chain is Methyl-coenzyme M reductase subunit beta (443 aa).

Coenzyme M is bound at residue tyrosine 367. A coenzyme B-binding site is contributed by glycine 369.

It belongs to the methyl-coenzyme M reductase beta subunit family. As to quaternary structure, MCR is a hexamer of two alpha, two beta, and two gamma chains, forming a dimer of heterotrimers. The cofactor is coenzyme F430.

The protein resides in the cytoplasm. The enzyme catalyses coenzyme B + methyl-coenzyme M = methane + coenzyme M-coenzyme B heterodisulfide. It participates in one-carbon metabolism; methyl-coenzyme M reduction; methane from methyl-coenzyme M: step 1/1. Its function is as follows. Component of the methyl-coenzyme M reductase (MCR) I that catalyzes the reductive cleavage of methyl-coenzyme M (CoM-S-CH3 or 2-(methylthio)ethanesulfonate) using coenzyme B (CoB or 7-mercaptoheptanoylthreonine phosphate) as reductant which results in the production of methane and the mixed heterodisulfide of CoB and CoM (CoM-S-S-CoB). This is the final step in methanogenesis. The polypeptide is Methyl-coenzyme M reductase subunit beta (mcrB) (Methanococcus vannielii).